The sequence spans 276 residues: ADP-dependent (S)-NAD(P)H-hydrate dehydratase (276 aa).

Residues 7–275 (TEEHVRATLP…DILPRVWKRF (269 aa)) form the YjeF C-terminal domain. Residues alanine 42, glycine 104, and histidine 149 each contribute to the (6S)-NADPHX site. AMP contacts are provided by residues 186-190 (KGNQT) and glycine 215. A (6S)-NADPHX-binding site is contributed by aspartate 216.

Belongs to the NnrD/CARKD family. As to quaternary structure, homotetramer. Mg(2+) serves as cofactor.

The enzyme catalyses (6S)-NADHX + ADP = AMP + phosphate + NADH + H(+). It carries out the reaction (6S)-NADPHX + ADP = AMP + phosphate + NADPH + H(+). In terms of biological role, catalyzes the dehydration of the S-form of NAD(P)HX at the expense of ADP, which is converted to AMP. Together with NAD(P)HX epimerase, which catalyzes the epimerization of the S- and R-forms, the enzyme allows the repair of both epimers of NAD(P)HX, a damaged form of NAD(P)H that is a result of enzymatic or heat-dependent hydration. This Bacillus subtilis (strain 168) protein is ADP-dependent (S)-NAD(P)H-hydrate dehydratase.